Reading from the N-terminus, the 99-residue chain is Aspartyl/glutamyl-tRNA(Asn/Gln) amidotransferase subunit C (99 aa).

This sequence belongs to the GatC family. Heterotrimer of A, B and C subunits.

It catalyses the reaction L-glutamyl-tRNA(Gln) + L-glutamine + ATP + H2O = L-glutaminyl-tRNA(Gln) + L-glutamate + ADP + phosphate + H(+). The catalysed reaction is L-aspartyl-tRNA(Asn) + L-glutamine + ATP + H2O = L-asparaginyl-tRNA(Asn) + L-glutamate + ADP + phosphate + 2 H(+). Allows the formation of correctly charged Asn-tRNA(Asn) or Gln-tRNA(Gln) through the transamidation of misacylated Asp-tRNA(Asn) or Glu-tRNA(Gln) in organisms which lack either or both of asparaginyl-tRNA or glutaminyl-tRNA synthetases. The reaction takes place in the presence of glutamine and ATP through an activated phospho-Asp-tRNA(Asn) or phospho-Glu-tRNA(Gln). This chain is Aspartyl/glutamyl-tRNA(Asn/Gln) amidotransferase subunit C, found in Orientia tsutsugamushi (strain Ikeda) (Rickettsia tsutsugamushi).